The chain runs to 222 residues: Histone H1.5 (222 aa).

Positions 1 to 16 (MSETAPAETTAPAPVE) are enriched in low complexity. The interval 1–55 (MSETAPAETTAPAPVEKSPAKKKTKKAGAAKRKATGPPVSELITKAVSASKERGG) is disordered. Ser-2 bears the N-acetylserine mark. Ser-2 bears the Phosphoserine mark. Lys-17 is modified (N6-acetyllysine). The residue at position 18 (Ser-18) is a Phosphoserine. Residues 20-34 (AKKKTKKAGAAKRKA) are compositionally biased toward basic residues. An N6-methyllysine modification is found at Lys-26. Lys-33 is subject to N6-(beta-hydroxybutyryl)lysine; alternate. Lys-33 bears the N6-succinyllysine; alternate mark. A Phosphothreonine modification is found at Thr-35. The region spanning 35-108 (TGPPVSELIT…GASGSFKLNK (74 aa)) is the H15 domain. Lys-45 is subject to N6-acetyllysine. N6-(beta-hydroxybutyryl)lysine is present on Lys-51. Position 53 is a citrulline (Arg-53). Position 63 is an N6-(beta-hydroxybutyryl)lysine (Lys-63). Lys-74 is subject to N6-acetyllysine. N6-(beta-hydroxybutyryl)lysine is present on residues Lys-84, Lys-89, and Lys-105. Residues 94–222 (QTKGTGASGS…KVKKAVSKKK (129 aa)) are disordered. The segment covering 118–129 (KAKKTGAAKAKK) has biased composition (basic residues). 2 positions are modified to phosphothreonine: Thr-134 and Thr-151. The span at 136 to 157 (KKPKKTAGAKKTVKKTPKKAKK) shows a compositional bias: basic residues. Residue Lys-164 is modified to N6-acetyllysine. The segment covering 165-183 (KVTKSPKKAKAAAKPKKAT) has biased composition (basic residues). Phosphoserine is present on residues Ser-169 and Ser-185. Residues 190–222 (KAVKSKASKPKVTKPKAAKPKAAKVKKAVSKKK) show a composition bias toward basic residues.

It belongs to the histone H1/H5 family. As to quaternary structure, interacts with MSX1. In terms of processing, H1 histones are progressively phosphorylated during the cell cycle, becoming maximally phosphorylated during late G2 phase and M phase, and being dephosphorylated sharply thereafter. Post-translationally, citrullination at Arg-53 (H1R54ci) by PADI4 takes place within the DNA-binding site of H1 and results in its displacement from chromatin and global chromatin decondensation, thereby promoting pluripotency and stem cell maintenance.

The protein resides in the nucleus. It localises to the chromosome. In terms of biological role, histone H1 protein binds to linker DNA between nucleosomes forming the macromolecular structure known as the chromatin fiber. Histones H1 are necessary for the condensation of nucleosome chains into higher-order structured fibers. Also acts as a regulator of individual gene transcription through chromatin remodeling, nucleosome spacing and DNA methylation. The chain is Histone H1.5 (H1-5) from Rattus norvegicus (Rat).